The sequence spans 498 residues: ATP synthase subunit beta, chloroplastic (498 aa).

172 to 179 is a binding site for ATP; that stretch reads GGAGVGKT.

This sequence belongs to the ATPase alpha/beta chains family. F-type ATPases have 2 components, CF(1) - the catalytic core - and CF(0) - the membrane proton channel. CF(1) has five subunits: alpha(3), beta(3), gamma(1), delta(1), epsilon(1). CF(0) has four main subunits: a(1), b(1), b'(1) and c(9-12).

The protein resides in the plastid. Its subcellular location is the chloroplast thylakoid membrane. It catalyses the reaction ATP + H2O + 4 H(+)(in) = ADP + phosphate + 5 H(+)(out). Functionally, produces ATP from ADP in the presence of a proton gradient across the membrane. The catalytic sites are hosted primarily by the beta subunits. This is ATP synthase subunit beta, chloroplastic from Elaeis oleifera (American oil palm).